Consider the following 493-residue polypeptide: Alpha-amylase-related protein (493 aa).

The first 19 residues, 1-19 (MFKFALTLTLCLAGSLSLA), serve as a signal peptide directing secretion. At Q20 the chain carries Pyrrolidone carboxylic acid. C47 and C103 are joined by a disulfide. Residues N117, Q168, and D177 each contribute to the Ca(2+) site. An intrachain disulfide couples C156 to C170. Position 205 (R205) interacts with chloride. Residue D207 is the Nucleophile of the active site. A Ca(2+)-binding site is contributed by H211. Residue E244 is the Proton donor of the active site. Residues N307 and R342 each contribute to the chloride site. 3 cysteine pairs are disulfide-bonded: C375-C381, C417-C440, and C447-C459.

The protein belongs to the glycosyl hydrolase 13 family. In terms of assembly, monomer. It depends on Ca(2+) as a cofactor. Chloride is required as a cofactor. As to expression, midgut and fat body.

The protein localises to the secreted. It carries out the reaction Endohydrolysis of (1-&gt;4)-alpha-D-glucosidic linkages in polysaccharides containing three or more (1-&gt;4)-alpha-linked D-glucose units.. The sequence is that of Alpha-amylase-related protein (Amyrel) from Drosophila melanogaster (Fruit fly).